The following is a 470-amino-acid chain: MTMAKTLYEKVFDAHVVYEGKNELPILYIDRHLIHEVTSPQAFSGLKMAKRRMARADLTLATIDHDVSTKSMDLNACSDMAKEQITTLMQNTKEFGVRLLGLGDKNQGIVHIVGPELGFTLPGVTLVCGDSHTATHGAFGALAFGIGTSEVEHVMATQTLKQAKLKTMKIECKGQFQKGVYTKDLILYLIAQYGTAKGTGYAIEFCGELIRNLSMEARMTLCNMAIEFGAKVGMIAPDEITFEYIKGKEFAPKGEEFQKYCEYWKSLRSDEGAKYDASITLDVSKIKPQISYGTNPSQVIGIDEKIPKISDFKNQSEQKSLLDALYYVNLEQDQVIEGVKIDIVFIGSCTNGRLEDLKIAADILKGRKIHKNVKALIVPGSMQVRKEAENLGLDKIFIEAGCEWRYAGCSMCLGMNDDKANSGQRVASTSNRNFVGRQGKGSITHLMSPASAAACAIEGVICDNRKYLGV.

Residues Cys-349, Cys-409, and Cys-412 each coordinate [4Fe-4S] cluster.

Belongs to the aconitase/IPM isomerase family. LeuC type 1 subfamily. Heterodimer of LeuC and LeuD. It depends on [4Fe-4S] cluster as a cofactor.

The enzyme catalyses (2R,3S)-3-isopropylmalate = (2S)-2-isopropylmalate. Its pathway is amino-acid biosynthesis; L-leucine biosynthesis; L-leucine from 3-methyl-2-oxobutanoate: step 2/4. Its function is as follows. Catalyzes the isomerization between 2-isopropylmalate and 3-isopropylmalate, via the formation of 2-isopropylmaleate. The polypeptide is 3-isopropylmalate dehydratase large subunit (Campylobacter jejuni subsp. jejuni serotype O:2 (strain ATCC 700819 / NCTC 11168)).